We begin with the raw amino-acid sequence, 171 residues long: Squamosa promoter-binding protein 2 (171 aa).

2 disordered regions span residues G20–V46 and K57–G76. The segment covering E22–Q40 has biased composition (acidic residues). The SBP-type zinc-finger motif lies at Q82–S159. Residues C85, C90, C107, H110, C126, C129, H133, and C145 each coordinate Zn(2+). The short motif at K142–K158 is the Bipartite nuclear localization signal element. Basic residues predominate over residues L149 to K158. The segment at L149–R171 is disordered. Residues S159–R171 are compositionally biased toward basic and acidic residues.

The protein resides in the nucleus. Functionally, probable transcriptional factor. Binds to the promoter of the SQUAMOSA gene. The protein is Squamosa promoter-binding protein 2 (SBP2) of Antirrhinum majus (Garden snapdragon).